Consider the following 549-residue polypeptide: SET and MYND domain-containing protein DDB_G0277331 (549 aa).

The SET domain occupies 27-283; the sequence is KGIELRYCDG…KDEELFINYS (257 aa). Zn(2+) is bound by residues Cys71, Cys74, Cys90, Cys93, Cys99, Cys103, His111, and Cys115. Residues 71–115 form an MYND-type zinc finger; the sequence is CDECLKNKLDLEEGKTLKRCSNCKLVYYCSTDCQTKAWKIHKQEC. Residues 340-401 adopt a coiled-coil conformation; it reads NINNNNNNNN…IIKNLQNKLS (62 aa).

This sequence belongs to the class V-like SAM-binding methyltransferase superfamily.

Functionally, probable methyltransferase. This Dictyostelium discoideum (Social amoeba) protein is SET and MYND domain-containing protein DDB_G0277331.